A 1405-amino-acid chain; its full sequence is DNA-directed RNA polymerase subunit beta' (1405 aa).

Zn(2+)-binding residues include Cys-70, Cys-72, Cys-85, and Cys-88. Mg(2+)-binding residues include Asp-460, Asp-462, and Asp-464. Zn(2+) is bound by residues Cys-814, Cys-888, Cys-895, and Cys-898.

It belongs to the RNA polymerase beta' chain family. As to quaternary structure, the RNAP catalytic core consists of 2 alpha, 1 beta, 1 beta' and 1 omega subunit. When a sigma factor is associated with the core the holoenzyme is formed, which can initiate transcription. It depends on Mg(2+) as a cofactor. Zn(2+) is required as a cofactor.

It catalyses the reaction RNA(n) + a ribonucleoside 5'-triphosphate = RNA(n+1) + diphosphate. Functionally, DNA-dependent RNA polymerase catalyzes the transcription of DNA into RNA using the four ribonucleoside triphosphates as substrates. The polypeptide is DNA-directed RNA polymerase subunit beta' (Shewanella sediminis (strain HAW-EB3)).